The primary structure comprises 187 residues: Bifunctional protein PyrR (187 aa).

Positions 109 to 121 (VILVDDVLYSGRS) match the PRPP-binding motif.

The protein belongs to the purine/pyrimidine phosphoribosyltransferase family. PyrR subfamily.

It catalyses the reaction UMP + diphosphate = 5-phospho-alpha-D-ribose 1-diphosphate + uracil. In terms of biological role, regulates the transcription of the pyrimidine nucleotide (pyr) operon in response to exogenous pyrimidines. Also displays a weak uracil phosphoribosyltransferase activity which is not physiologically significant. This chain is Bifunctional protein PyrR, found in Mycobacterium ulcerans (strain Agy99).